A 367-amino-acid polypeptide reads, in one-letter code: Putative threonine-phosphate decarboxylase (367 aa).

O-phospho-L-threonine contacts are provided by residues 12-13 (HG), Asn29, and Asn152. Residue Lys213 is modified to N6-(pyridoxal phosphate)lysine. O-phospho-L-threonine-binding residues include Arg320 and Arg334.

It belongs to the class-II pyridoxal-phosphate-dependent aminotransferase family. It depends on pyridoxal 5'-phosphate as a cofactor.

It catalyses the reaction O-phospho-L-threonine + H(+) = (R)-1-aminopropan-2-yl phosphate + CO2. Its pathway is cofactor biosynthesis; adenosylcobalamin biosynthesis. Decarboxylates L-threonine-O-3-phosphate to yield (R)-1-amino-2-propanol O-2-phosphate, the precursor for the linkage between the nucleotide loop and the corrin ring in cobalamin. This chain is Putative threonine-phosphate decarboxylase (cobD), found in Caldanaerobacter subterraneus subsp. tengcongensis (strain DSM 15242 / JCM 11007 / NBRC 100824 / MB4) (Thermoanaerobacter tengcongensis).